The primary structure comprises 311 residues: Tricarboxylate transport protein, mitochondrial (311 aa).

Positions 1–13 (MAAPRGPRALSAA) are cleaved as a propeptide — removed in mature form. Residues 1-21 (MAAPRGPRALSAAAPGSGKPK) form a disordered region. Solcar repeat units follow at residues 23-111 (THPG…LSNH), 122-208 (RRGL…LRNW), and 218-303 (MNPL…VVKL). 3 helical membrane-spanning segments follow: residues 29–46 (ILAGGLAGGIEICITFPT), 86–105 (GLSSLLYGSIPKAAVRFGMF), and 129–143 (LGAGVAEAVVVVCPM). The residue at position 156 (Ser-156) is a Phosphoserine. Helical transmembrane passes span 183–202 (GLTATVLKQGSNQAIRFFVM), 224–241 (GVFGATAGAASVFGNTPL), and 278–297 (GTVPRLGRVCLDVAIVFIIY).

Belongs to the mitochondrial carrier (TC 2.A.29) family. In terms of processing, possesses a short cleavable presequence, which, however, is found to be dispensable both for targeting to mitochondria and insertion into the inner membrane. However, the presequence is required to keep SLC25A1 in a soluble state and thus in an import-competent state. Mature SLC25A1 lacking the presequence is prone to aggregation. In terms of tissue distribution, expressed minimally but ubiquitously throughout the adult brain. Detected at higher levels in the olfactory bulb, neocortex and cerebellum. Also expressed in a subset of large cells in the globus pallidus.

It localises to the mitochondrion inner membrane. The protein resides in the mitochondrion membrane. It carries out the reaction (S)-malate(in) + citrate(out) = (S)-malate(out) + citrate(in). The catalysed reaction is D-threo-isocitrate(in) + citrate(out) = D-threo-isocitrate(out) + citrate(in). The enzyme catalyses citrate(out) + succinate(in) = citrate(in) + succinate(out). It catalyses the reaction cis-aconitate(in) + citrate(out) = cis-aconitate(out) + citrate(in). It carries out the reaction trans-aconitate(in) + citrate(out) = trans-aconitate(out) + citrate(in). The catalysed reaction is phosphoenolpyruvate(in) + citrate(out) = phosphoenolpyruvate(out) + citrate(in). The enzyme catalyses maleate(in) + citrate(out) = maleate(out) + citrate(in). Functionally, mitochondrial electroneutral antiporter that exports citrate from the mitochondria into the cytosol in exchange for malate. Also able to mediate the exchange of citrate for isocitrate, phosphoenolpyruvate, cis-aconitate and to a lesser extent trans-aconitate, maleate and succinate. In the cytoplasm, citrate plays important roles in fatty acid and sterol synthesis, regulation of glycolysis, protein acetylation, and other physiopathological processes. This chain is Tricarboxylate transport protein, mitochondrial, found in Mus musculus (Mouse).